A 279-amino-acid chain; its full sequence is Pantothenate synthetase (279 aa).

Residue 26 to 33 (MGALHSGH) participates in ATP binding. The active-site Proton donor is the His33. Gln57 contacts (R)-pantoate. Residue Gln57 participates in beta-alanine binding. Residue 147 to 150 (GQKD) participates in ATP binding. Gln153 contacts (R)-pantoate. Residues Ile176 and 184–187 (ESSR) each bind ATP.

The protein belongs to the pantothenate synthetase family. As to quaternary structure, homodimer.

Its subcellular location is the cytoplasm. The catalysed reaction is (R)-pantoate + beta-alanine + ATP = (R)-pantothenate + AMP + diphosphate + H(+). It functions in the pathway cofactor biosynthesis; (R)-pantothenate biosynthesis; (R)-pantothenate from (R)-pantoate and beta-alanine: step 1/1. In terms of biological role, catalyzes the condensation of pantoate with beta-alanine in an ATP-dependent reaction via a pantoyl-adenylate intermediate. The polypeptide is Pantothenate synthetase (Corynebacterium glutamicum (strain R)).